A 231-amino-acid chain; its full sequence is Cuticlin 2 (231 aa).

A signal peptide spans 1 to 16; the sequence is MQKLIVFFTTIAAAQA. 12 consecutive repeat copies span residues 75-78, 79-82, 90-93, 105-108, 114-117, 121-124, 137-140, 153-156, 169-172, 192-195, 208-211, and 218-221. The tract at residues 75 to 221 is 12 X 4 AA repeats of A-A-P-[AVI]; sequence AAPIAAPAGG…AGGYQAAAPA (147 aa).

Post-translationally, tyrosine residues can be cross-linked in vitro, leading to the formation of insoluble high molecular-weight complexes.

Its subcellular location is the secreted. Its function is as follows. Component of the insoluble part of the cuticles. This chain is Cuticlin 2, found in Caenorhabditis elegans.